A 280-amino-acid polypeptide reads, in one-letter code: Bifunctional protein FolD (280 aa).

NADP(+)-binding positions include 166 to 168 (GRS) and Ser191.

The protein belongs to the tetrahydrofolate dehydrogenase/cyclohydrolase family. In terms of assembly, homodimer.

The enzyme catalyses (6R)-5,10-methylene-5,6,7,8-tetrahydrofolate + NADP(+) = (6R)-5,10-methenyltetrahydrofolate + NADPH. The catalysed reaction is (6R)-5,10-methenyltetrahydrofolate + H2O = (6R)-10-formyltetrahydrofolate + H(+). It functions in the pathway one-carbon metabolism; tetrahydrofolate interconversion. Functionally, catalyzes the oxidation of 5,10-methylenetetrahydrofolate to 5,10-methenyltetrahydrofolate and then the hydrolysis of 5,10-methenyltetrahydrofolate to 10-formyltetrahydrofolate. This chain is Bifunctional protein FolD, found in Marinomonas sp. (strain MWYL1).